A 440-amino-acid chain; its full sequence is Ribosomal protein uS12 methylthiotransferase RimO (440 aa).

The 116-residue stretch at 2–117 (VKVGFVSLGC…LPNVIKKLYE (116 aa)) folds into the MTTase N-terminal domain. Positions 11, 47, 80, 156, 160, and 163 each coordinate [4Fe-4S] cluster. Residues 142-371 (ATPKFYAYIK…LNLQRKISLE (230 aa)) form the Radical SAM core domain. The 67-residue stretch at 374 to 440 (RKRISKKYEV…FEYDLVGEVI (67 aa)) folds into the TRAM domain.

Belongs to the methylthiotransferase family. RimO subfamily. [4Fe-4S] cluster is required as a cofactor.

Its subcellular location is the cytoplasm. The enzyme catalyses L-aspartate(89)-[ribosomal protein uS12]-hydrogen + (sulfur carrier)-SH + AH2 + 2 S-adenosyl-L-methionine = 3-methylsulfanyl-L-aspartate(89)-[ribosomal protein uS12]-hydrogen + (sulfur carrier)-H + 5'-deoxyadenosine + L-methionine + A + S-adenosyl-L-homocysteine + 2 H(+). Its function is as follows. Catalyzes the methylthiolation of an aspartic acid residue of ribosomal protein uS12. This chain is Ribosomal protein uS12 methylthiotransferase RimO, found in Caldicellulosiruptor saccharolyticus (strain ATCC 43494 / DSM 8903 / Tp8T 6331).